A 697-amino-acid chain; its full sequence is DNA ligase (697 aa).

Residues 44–48, 93–94, and Glu-123 contribute to the NAD(+) site; these read DGEFD and SL. Lys-125 acts as the N6-AMP-lysine intermediate in catalysis. Arg-146, Glu-186, Lys-302, and Lys-326 together coordinate NAD(+). 4 residues coordinate Zn(2+): Cys-420, Cys-423, Cys-439, and Cys-445. In terms of domain architecture, BRCT spans 609–697; it reads SIPRNLEGLS…GPDAVTDSGV (89 aa).

The protein belongs to the NAD-dependent DNA ligase family. LigA subfamily. Mg(2+) serves as cofactor. Mn(2+) is required as a cofactor.

It carries out the reaction NAD(+) + (deoxyribonucleotide)n-3'-hydroxyl + 5'-phospho-(deoxyribonucleotide)m = (deoxyribonucleotide)n+m + AMP + beta-nicotinamide D-nucleotide.. In terms of biological role, DNA ligase that catalyzes the formation of phosphodiester linkages between 5'-phosphoryl and 3'-hydroxyl groups in double-stranded DNA using NAD as a coenzyme and as the energy source for the reaction. It is essential for DNA replication and repair of damaged DNA. The polypeptide is DNA ligase (Rhodococcus opacus (strain B4)).